The primary structure comprises 208 residues: Ribosomal RNA small subunit methyltransferase G (208 aa).

Residues Gly76, Leu81, 127–128 (VE), and Arg142 each bind S-adenosyl-L-methionine.

Belongs to the methyltransferase superfamily. RNA methyltransferase RsmG family.

It is found in the cytoplasm. The enzyme catalyses guanosine(527) in 16S rRNA + S-adenosyl-L-methionine = N(7)-methylguanosine(527) in 16S rRNA + S-adenosyl-L-homocysteine. Its function is as follows. Specifically methylates the N7 position of guanine in position 527 of 16S rRNA. The chain is Ribosomal RNA small subunit methyltransferase G from Legionella pneumophila (strain Corby).